Here is a 482-residue protein sequence, read N- to C-terminus: UDP-glycosyltransferase 1 (482 aa).

N-linked (GlcNAc...) asparagine glycosylation is present at N243. Residues 450 to 470 (IYLVYALVLGSAWWIGKTILG) traverse the membrane as a helical segment.

Belongs to the glycosyltransferase 28 family.

Its subcellular location is the membrane. It catalyses the reaction exophillate aglycone + UDP-alpha-D-glucose = exophillate + UDP + H(+). The protein operates within secondary metabolite biosynthesis. Acts as a depside 2-O-glucosyltransferase that catalyzes the first glycosylation step during phaeomoniecin D biosynthesis by producing the intermediate exophillic acid which is further O-galactosylated into phaeomoniecin D by the C-galactosyltransferase OGT2. This Phaeomoniella chlamydospora (Phaeoacremonium chlamydosporum) protein is UDP-glycosyltransferase 1.